A 907-amino-acid chain; its full sequence is MALAKQIMGASLMDQKTSVFGSNLCLNHVLVNKHRLRLRKTRKNGSMVVAAISEDLVKLXRVEKEKPVTFKVRAVLTVRNKNKEDFFKDTIFRKIDAITDQIGWNVVIQLFSNDIDPRTRAAKKSNEAVLKDWSKKSNVKTERVNYTADIMVDSDFGIPGAITISNKHQKEFFLETITIEGFACGPVHFPCNSWVQSTKDLPNPRIFFTNQPYLPDETPVGLKSLRYQELKDLRGDGTGVRKLSDRIYDYDVYNDLGNPDRGNDFVRPTLGGEKIPYPRRCRTGRVPSDTDITAESRVEKPFPLYVPRDEQFEESKANAFSTGRLRAVLHNLLPSMVTSISKKNDFKGFSQIDSLYSEGVFLKLGLQDDLLKKLPLPNLVTRLHESSQGGGLLKYDTPKILSKDKFAWLRDDEFARQTIAGVNPVSIEKLKVFPPVSQLDPEKHGPQESALREEHIVGFLDGRTVKQAIEEDKLFIIDYHDIYLPFLDRINALDGRKAYATRTIFYLNPSGTLKPVAIELSLPQALPGSESKRVLTPPSDATSNWMWQLAKAHXCSNDAGAHQLVHHFLRTHAAIEPFILAAHRQLSAMHPIYKLLDPHMRYTLEINQLARQNLINADGVIEACFTPGRYGMEISASAYKNWRFDLEGLPADLIRRGMAVPDPSKPHGLKLVMEDYPYASDGLMIWEAIQNWVKTYVNHYYPDSAQVCNDRELQAWYAESINVGHADLRHKDWWPTLAGADDLTSVLTTIIWLASAQHAALNFGQYPYGGYIPNRPPLMRRLLPDVNDPEYLSFHDDPQKYFLSALPSLLQSTKYMAVVDTLSTHSPDEEYIGERQQTDTWSGDAEIVEAFYAFSAEIQRIEKEIEKRNSDTSLKNRCGAGVLPYELLAPSSGPGATCRGVPNSISI.

A chloroplast-targeting transit peptide spans Met1–Val49. Residues Asp85–Thr209 form the PLAT domain. The 696-residue stretch at Pro212–Ile907 folds into the Lipoxygenase domain. Fe cation is bound by residues His567, His572, His758, Asn762, and Ile907.

It belongs to the lipoxygenase family. Fe cation is required as a cofactor. As to expression, confined to glandular trichomes in flowers, and, at low levels, in leaves.

It localises to the plastid. Its subcellular location is the chloroplast. The enzyme catalyses (9Z,12Z,15Z)-octadecatrienoate + O2 = 13-hydroperoxy-(9Z,11E,15Z)-octadecatrienoate. It functions in the pathway lipid metabolism; oxylipin biosynthesis. It participates in isoprenoid biosynthesis. Component of the monoterpenoid pyrethrins biosynthesis; pyrethrins are widely used plant-derived pesticide. Plant lipoxygenases may be involved in a number of diverse aspects of plant physiology including growth and development, pest resistance, and senescence or responses to wounding. Catalyzes the hydroperoxidation of lipids containing a cis,cis-1,4-pentadiene structure. Mediates the peroxidation of linolenic acid leading to the production of 13-hydroperoxylinolenic acid. The chain is Lipoxygenase 1, chloroplastic from Tanacetum cinerariifolium (Dalmatian daisy).